A 76-amino-acid polypeptide reads, in one-letter code: ATP synthase subunit 9, mitochondrial (76 aa).

A run of 2 helical transmembrane segments spans residues 14-34 (ISTIGLLGAGIGIAIVFAALI) and 52-72 (ILGFALSEATGLFCLMISFLL).

This sequence belongs to the ATPase C chain family. F-type ATPases have 2 components, CF(1) - the catalytic core - and CF(0) - the membrane proton channel. CF(1) has five subunits: alpha(3), beta(3), gamma(1), delta(1), epsilon(1). CF(0) has three main subunits: a, b and c.

The protein localises to the mitochondrion membrane. In terms of biological role, mitochondrial membrane ATP synthase (F(1)F(0) ATP synthase or Complex V) produces ATP from ADP in the presence of a proton gradient across the membrane which is generated by electron transport complexes of the respiratory chain. F-type ATPases consist of two structural domains, F(1) - containing the extramembraneous catalytic core and F(0) - containing the membrane proton channel, linked together by a central stalk and a peripheral stalk. During catalysis, ATP synthesis in the catalytic domain of F(1) is coupled via a rotary mechanism of the central stalk subunits to proton translocation. Part of the complex F(0) domain. A homomeric c-ring of probably 10 subunits is part of the complex rotary element. The protein is ATP synthase subunit 9, mitochondrial (ATP9) of Vanderwaltozyma polyspora (strain ATCC 22028 / DSM 70294 / BCRC 21397 / CBS 2163 / NBRC 10782 / NRRL Y-8283 / UCD 57-17) (Kluyveromyces polysporus).